Here is a 148-residue protein sequence, read N- to C-terminus: Lipoprotein MlpH (148 aa).

The N-terminal stretch at 1 to 17 (MKIINILFCLFLLMLNG) is a signal peptide. Cysteine 18 is lipidated: N-palmitoyl cysteine. Residue cysteine 18 is the site of S-diacylglycerol cysteine attachment. Positions 26 to 61 (LKNNAQQTKSRRKRDLTQKEVTQEKPKSKEELLREK) are disordered. A compositionally biased stretch (basic and acidic residues) spans 40–61 (DLTQKEVTQEKPKSKEELLREK).

Belongs to the Multicopy lipoprotein (Mlp) family.

The protein localises to the cell outer membrane. Functionally, an outer membrane protein that may participate in pathogenesis. Some human Lyme disease patients have antibodies against this protein. The Mlp proteins probably undergo intragenic recombination, generating new alleles. This Borreliella burgdorferi (strain ATCC 35210 / DSM 4680 / CIP 102532 / B31) (Borrelia burgdorferi) protein is Lipoprotein MlpH.